The primary structure comprises 74 residues: XTSATATYAKTQDWGSCFEGKWTIKNTAACSSYPSWVAGRSYAAGDIVYYTDXGYTDLPVSRQKMCQNGMVTNC.

The N-terminus of 70 kDa chitinase stretch occupies residues 1-27; it reads XTSATATYAKTQDWGSCFEGKWTIKNT. The N-terminus of 30 kDa chitinase stretch occupies residues 28-52; sequence AACSSYPSWVAGRSYAAGDIVYYTD. The N-terminus of 20.5 kDa chitinase stretch occupies residues 53–74; sequence XGYTDLPVSRQKMCQNGMVTNC.

This sequence belongs to the glycosyl hydrolase 18 family. Chitinase class II subfamily. Homodimer, but homotrimers and homotetramers could be observed for the 20.5 and 30 kDa chitinases. In terms of processing, the 70 kDa chitinase is probably the precursor protein of the 30 and 20.5 kDa chitinases.

It carries out the reaction Random endo-hydrolysis of N-acetyl-beta-D-glucosaminide (1-&gt;4)-beta-linkages in chitin and chitodextrins.. Able to cleave chitin oligomers from N=3 to 6. The polypeptide is Chitinases 70, 30, and 20.5 kDa (Streptomyces olivaceoviridis (Streptomyces corchorusii)).